The primary structure comprises 262 residues: Homeobox protein vent1 (262 aa).

Basic and acidic residues-rich tracts occupy residues 16–26 and 44–55; these read REEAPDGKDSV and YAKEIPRRKDGQ. Residues 16–129 form a disordered region; that stretch reads REEAPDGKDS…KSPKSDLQRR (114 aa). Positions 58-79 are enriched in polar residues; sequence GEITSFQCSSEEARNRQFSNPS. Residues 114-128 show a composition bias toward basic and acidic residues; it reads DTEHRSKSPKSDLQR. The homeobox DNA-binding region spans 127–186; the sequence is QRRLRTAFTPQQITRLEQAFNKQRYLGASERKKLATSLQLSEIQVKTWFQNRRMKLKRQI.

It is found in the nucleus. Transcriptional repressor. Cooperates with vent2 in a ventral signaling pathway downstream of bmp4, which antagonizes the Spemann organizer and dorsal mesoderm formation, and leads to ventral mesoderm formation. Acts downstream of bmp4 to repress transcription of foxa4-B/XFD-1'. Binds to DNA with preference for the target sequence 5'-CTATT[T/C]G-3'. Also binds 5'-TGCATTTTG-3' at a lower frequency, and occasionally 5'-TTGATC-3'. Binds to the homeobox 2 (HBX2) repressor element in the promoter of the myf5 gene. Cooperates with vent2 to repress myf5 expression in the ventral domain. This Xenopus tropicalis (Western clawed frog) protein is Homeobox protein vent1.